The primary structure comprises 78 residues: Alpha-amylase inhibitor Haim-1 (78 aa).

Cystine bridges form between cysteine 11/cysteine 27 and cysteine 45/cysteine 72.

Its function is as follows. Inhibits mammalian alpha-amylases specifically but has no action on plant and microbial alpha-amylases. The polypeptide is Alpha-amylase inhibitor Haim-1 (Streptomyces griseosporeus).